The sequence spans 581 residues: Arginine--tRNA ligase (581 aa).

Residues Pro126–His136 carry the 'HIGH' region motif.

The protein belongs to the class-I aminoacyl-tRNA synthetase family. As to quaternary structure, monomer.

It is found in the cytoplasm. The catalysed reaction is tRNA(Arg) + L-arginine + ATP = L-arginyl-tRNA(Arg) + AMP + diphosphate. The protein is Arginine--tRNA ligase of Shewanella sp. (strain MR-7).